The chain runs to 278 residues: Large ribosomal subunit protein uL2c (278 aa).

Positions 224–267 are disordered; that stretch reads VVMNPVDHPHGGGEGRAPIGRKKPLTPWGHTALGGRSRKNHKYS.

The protein belongs to the universal ribosomal protein uL2 family. Part of the 50S ribosomal subunit.

It is found in the plastid. It localises to the chloroplast. This is Large ribosomal subunit protein uL2c (rpl2) from Huperzia lucidula (Shining clubmoss).